A 173-amino-acid chain; its full sequence is Large ribosomal subunit protein uL10 (173 aa).

The protein belongs to the universal ribosomal protein uL10 family. In terms of assembly, part of the ribosomal stalk of the 50S ribosomal subunit. The N-terminus interacts with L11 and the large rRNA to form the base of the stalk. The C-terminus forms an elongated spine to which L12 dimers bind in a sequential fashion forming a multimeric L10(L12)X complex.

In terms of biological role, forms part of the ribosomal stalk, playing a central role in the interaction of the ribosome with GTP-bound translation factors. The chain is Large ribosomal subunit protein uL10 from Chlorobaculum tepidum (strain ATCC 49652 / DSM 12025 / NBRC 103806 / TLS) (Chlorobium tepidum).